The chain runs to 362 residues: Outer membrane porin protein OmpD (362 aa).

The N-terminal stretch at 1–21 (MKLKLVAVAVTSLLAAGVVNA) is a signal peptide.

Belongs to the Gram-negative porin family. Homotrimer.

It localises to the cell outer membrane. In terms of biological role, forms pores that allow passive diffusion of small molecules across the outer membrane. In Salmonella choleraesuis (strain SC-B67), this protein is Outer membrane porin protein OmpD (ompD).